The primary structure comprises 532 residues: Flavin-containing monooxygenase 3 (532 aa).

Residues 9 to 13, Glu32, 40 to 41, and 61 to 62 contribute to the FAD site; these read GAGVS, LW, and NS. NADP(+)-binding positions include 60 to 61 and 195 to 198; these read TN and SGCD. Ser401 carries the phosphoserine modification. Residues 510–530 traverse the membrane as a helical segment; sequence FFFHWLKPFAIPILLIAVFLG.

It belongs to the FMO family. It depends on FAD as a cofactor. As to expression, liver.

The protein localises to the microsome membrane. Its subcellular location is the endoplasmic reticulum membrane. The catalysed reaction is trimethylamine + NADPH + O2 = trimethylamine N-oxide + NADP(+) + H2O. The enzyme catalyses N,N-dimethylaniline + NADPH + O2 + H(+) = N,N-dimethylaniline N-oxide + NADP(+) + H2O. It carries out the reaction hypotaurine + NADPH + O2 + H(+) = taurine + NADP(+) + H2O. It catalyses the reaction (S)-nicotine + NADPH + O2 = trans-(S)-nicotine N(1')-oxide + NADP(+) + H2O. The catalysed reaction is albendazole + NADPH + O2 + H(+) = albendazole S-oxide + NADP(+) + H2O. Functionally, essential hepatic enzyme that catalyzes the oxygenation of a wide variety of nitrogen- and sulfur-containing compounds including drugs as well as dietary compounds. Plays an important role in the metabolism of trimethylamine (TMA), via the production of trimethylamine N-oxide (TMAO) metabolite. TMA is generated by the action of gut microbiota using dietary precursors such as choline, choline containing compounds, betaine or L-carnitine. By regulating TMAO concentration, FMO3 directly impacts both platelet responsiveness and rate of thrombus formation. This Macaca mulatta (Rhesus macaque) protein is Flavin-containing monooxygenase 3 (FMO3).